The primary structure comprises 624 residues: Vitamin B12 transporter BtuB (624 aa).

The signal sequence occupies residues 1 to 21 (MTIKKYTLLTALSVTAFSGWA). The TonB box signature appears at 31–38 (NEMVVTAN). A TBDR plug domain is found at 43–157 (PKSSVLAPVD…IGGVVNIITE (115 aa)). Cyanocob(III)alamin is bound by residues L88, S90, N97, and 115 to 116 (IS). A TBDR beta-barrel domain is found at 160–624 (TLGSTLTAGL…EYYFTGSYNF (465 aa)). A run of 3 beta stranded transmembrane segments spans residues 163-170 (STLTAGLG), 174-183 (YQNYNGSTQQ), and 189-200 (TTITLAGNYDYS). Ca(2+) is bound by residues D204, Q216, D218, and D220. Transmembrane regions (beta stranded) follow at residues 222–232 (YLGKMLWLGAN) and 237–253 (EQFS…NRSD). Positions 254, 255, and 266 each coordinate Ca(2+). A run of 17 beta stranded transmembrane segments spans residues 268–282 (RSLS…INFS), 284–301 (GGYA…QDYN), 314–330 (TLDD…NTYQ), 333–342 (LGNVGGGLDW), 358–374 (YEQR…QFVG), 376–386 (VTLEGAIRGDD), 390–405 (FGWH…WEFV), 408–422 (YRLI…KAPN), 440–449 (ESTQWEAAIT), 455–464 (LDWRLSAYRN), 481–498 (YYNV…TGSF), 502–517 (PLSH…PRNA), 525–537 (RRAK…QLDW), 543–557 (DWSV…RYDS), 568–582 (PVKL…LAVS), 595–606 (IANLFDKDYEMV), and 612–624 (PGRE…SYNF). A cyanocob(III)alamin-binding site is contributed by T314. R525 provides a ligand contact to cyanocob(III)alamin. The short motif at 607 to 624 (YGYQTPGREYYFTGSYNF) is the TonB C-terminal box element.

Belongs to the TonB-dependent receptor family. BtuB (TC 1.B.14.3.1) subfamily.

The protein resides in the cell outer membrane. Functionally, involved in the active translocation of vitamin B12 (cyanocobalamin) across the outer membrane to the periplasmic space. It derives its energy for transport by interacting with the trans-periplasmic membrane protein TonB. This chain is Vitamin B12 transporter BtuB, found in Yersinia pseudotuberculosis serotype O:1b (strain IP 31758).